Consider the following 344-residue polypeptide: 5,10-methenyltetrahydromethanopterin hydrogenase (344 aa).

This sequence belongs to the HMD family. Homotetramer.

It catalyses the reaction 5,10-methenyl-5,6,7,8-tetrahydromethanopterin + H2 = 5,10-methylenetetrahydromethanopterin + H(+). It functions in the pathway one-carbon metabolism; methanogenesis from CO(2); 5,10-methylene-5,6,7,8-tetrahydromethanopterin from 5,10-methenyl-5,6,7,8-tetrahydromethanopterin (hydrogen route): step 1/1. Its activity is regulated as follows. Activity requires salt; 100 mM sodium or potassium salts of chloride, phosphate or sulfate are equally effective. Inactivated by O(2). In terms of biological role, catalyzes the reversible reduction of methenyl-H(4)MPT(+) to methylene-H(4)MPT. This chain is 5,10-methenyltetrahydromethanopterin hydrogenase, found in Methanothermobacter marburgensis (strain ATCC BAA-927 / DSM 2133 / JCM 14651 / NBRC 100331 / OCM 82 / Marburg) (Methanobacterium thermoautotrophicum).